The primary structure comprises 247 residues: Ubiquinone biosynthesis O-methyltransferase (247 aa).

The S-adenosyl-L-methionine site is built by Arg39, Gly70, Asp91, and Met134.

This sequence belongs to the methyltransferase superfamily. UbiG/COQ3 family.

The enzyme catalyses a 3-demethylubiquinol + S-adenosyl-L-methionine = a ubiquinol + S-adenosyl-L-homocysteine + H(+). It carries out the reaction a 3-(all-trans-polyprenyl)benzene-1,2-diol + S-adenosyl-L-methionine = a 2-methoxy-6-(all-trans-polyprenyl)phenol + S-adenosyl-L-homocysteine + H(+). Its pathway is cofactor biosynthesis; ubiquinone biosynthesis. O-methyltransferase that catalyzes the 2 O-methylation steps in the ubiquinone biosynthetic pathway. The polypeptide is Ubiquinone biosynthesis O-methyltransferase (Cereibacter sphaeroides (strain ATCC 17029 / ATH 2.4.9) (Rhodobacter sphaeroides)).